The chain runs to 53 residues: Ribulose bisphosphate carboxylase large chain (53 aa).

Residues 1–2 constitute a propeptide that is removed on maturation; sequence MS. Pro-3 carries the N-acetylproline modification. Lys-14 is modified (N6,N6,N6-trimethyllysine).

This sequence belongs to the RuBisCO large chain family. Type I subfamily. In terms of assembly, heterohexadecamer of 8 large chains and 8 small chains.

It localises to the plastid. It is found in the chloroplast. It catalyses the reaction 2 (2R)-3-phosphoglycerate + 2 H(+) = D-ribulose 1,5-bisphosphate + CO2 + H2O. It carries out the reaction D-ribulose 1,5-bisphosphate + O2 = 2-phosphoglycolate + (2R)-3-phosphoglycerate + 2 H(+). Its function is as follows. RuBisCO catalyzes two reactions: the carboxylation of D-ribulose 1,5-bisphosphate, the primary event in carbon dioxide fixation, as well as the oxidative fragmentation of the pentose substrate in the photorespiration process. Both reactions occur simultaneously and in competition at the same active site. The protein is Ribulose bisphosphate carboxylase large chain (rbcL) of Malus domestica (Apple).